Consider the following 236-residue polypeptide: tRNA1(Val) (adenine(37)-N6)-methyltransferase (236 aa).

This sequence belongs to the methyltransferase superfamily. tRNA (adenine-N(6)-)-methyltransferase family.

The protein localises to the cytoplasm. The catalysed reaction is adenosine(37) in tRNA1(Val) + S-adenosyl-L-methionine = N(6)-methyladenosine(37) in tRNA1(Val) + S-adenosyl-L-homocysteine + H(+). Its function is as follows. Specifically methylates the adenine in position 37 of tRNA(1)(Val) (anticodon cmo5UAC). The sequence is that of tRNA1(Val) (adenine(37)-N6)-methyltransferase from Aeromonas hydrophila subsp. hydrophila (strain ATCC 7966 / DSM 30187 / BCRC 13018 / CCUG 14551 / JCM 1027 / KCTC 2358 / NCIMB 9240 / NCTC 8049).